Here is a 206-residue protein sequence, read N- to C-terminus: Large ribosomal subunit protein uL4 (206 aa).

The disordered stretch occupies residues 45 to 85 (QGNRAQKDREQVKHTTKKPWRQKGTGRARAGMSSSPLWRGG). Residues 58 to 70 (HTTKKPWRQKGTG) are compositionally biased toward basic residues.

Belongs to the universal ribosomal protein uL4 family. As to quaternary structure, part of the 50S ribosomal subunit.

Functionally, one of the primary rRNA binding proteins, this protein initially binds near the 5'-end of the 23S rRNA. It is important during the early stages of 50S assembly. It makes multiple contacts with different domains of the 23S rRNA in the assembled 50S subunit and ribosome. In terms of biological role, forms part of the polypeptide exit tunnel. The chain is Large ribosomal subunit protein uL4 from Burkholderia mallei (strain NCTC 10247).